The sequence spans 406 residues: Argininosuccinate synthase (406 aa).

ATP is bound by residues A13–S21 and A40. 2 residues coordinate L-citrulline: Y91 and S96. Residue G121 coordinates ATP. L-aspartate-binding residues include T123, N127, and D128. Position 127 (N127) interacts with L-citrulline. Positions 131, 182, 191, 267, and 279 each coordinate L-citrulline.

It belongs to the argininosuccinate synthase family. Type 1 subfamily. As to quaternary structure, homotetramer.

The protein resides in the cytoplasm. The enzyme catalyses L-citrulline + L-aspartate + ATP = 2-(N(omega)-L-arginino)succinate + AMP + diphosphate + H(+). It participates in amino-acid biosynthesis; L-arginine biosynthesis; L-arginine from L-ornithine and carbamoyl phosphate: step 2/3. In Brucella suis biovar 1 (strain 1330), this protein is Argininosuccinate synthase.